We begin with the raw amino-acid sequence, 366 residues long: Elongation factor Ts, mitochondrial (366 aa).

The N-terminal 50 residues, 1–50 (MAWSQSARKPMIGLLFRAQQHSARGYSYSAFQAHLSSSNVDQSATLLRRF), are a transit peptide targeting the mitochondrion.

It belongs to the EF-Ts family.

The protein localises to the mitochondrion. Associates with the EF-Tu.GDP complex and induces the exchange of GDP to GTP. It remains bound to the aminoacyl-tRNA.EF-Tu.GTP complex up to the GTP hydrolysis stage on the ribosome. This chain is Elongation factor Ts, mitochondrial, found in Oryza sativa subsp. japonica (Rice).